The following is a 414-amino-acid chain: Zinc metalloproteinase nas-26 (414 aa).

The N-terminal stretch at 1-20 (MTSSLVLILAPLALVAIGEA) is a signal peptide. Positions 21 to 61 (AFGNSSKIFEIPGLEVMASDKYPHFTTIETVSRTKVHRHRR) are excised as a propeptide. A glycan (N-linked (GlcNAc...) asparagine) is linked at N24. Residues 62-264 (EVIAGQIYDW…AKVINDIYCP (203 aa)) form the Peptidase M12A domain. Cystine bridges form between C103-C263, C126-C146, C267-C286, C289-C300, C308-C331, and C358-C378. H154 lines the Zn(2+) pocket. E155 is a catalytic residue. Zn(2+) contacts are provided by H158 and H164. One can recognise an EGF-like domain in the interval 251–307 (AFLDAKVINDIYCPNACQGRNHLNCLAGGYPDPNNCNVCRCPEGLGGPDCGRLQPSP). Positions 308–414 (CGGEIHASDQ…RFSLRFRRQA (107 aa)) constitute a CUB domain.

Zn(2+) is required as a cofactor.

It localises to the secreted. Metalloprotease. This chain is Zinc metalloproteinase nas-26 (toh-1), found in Caenorhabditis elegans.